The sequence spans 128 residues: Glycine cleavage system H protein (128 aa).

The 83-residue stretch at V23–Q105 folds into the Lipoyl-binding domain. K64 bears the N6-lipoyllysine mark.

It belongs to the GcvH family. As to quaternary structure, the glycine cleavage system is composed of four proteins: P, T, L and H. Requires (R)-lipoate as cofactor.

Functionally, the glycine cleavage system catalyzes the degradation of glycine. The H protein shuttles the methylamine group of glycine from the P protein to the T protein. The polypeptide is Glycine cleavage system H protein (Alcanivorax borkumensis (strain ATCC 700651 / DSM 11573 / NCIMB 13689 / SK2)).